We begin with the raw amino-acid sequence, 444 residues long: Deoxyguanosinetriphosphate triphosphohydrolase-like protein (444 aa).

A disordered region spans residues 1–26; that stretch reads MIASPWHERRLNEDKKRRNDHRSPFQ. An HD domain is found at 59–250; it reads RLTHSLEVSQ…MELADDIAYA (192 aa).

This sequence belongs to the dGTPase family. Type 2 subfamily.

This chain is Deoxyguanosinetriphosphate triphosphohydrolase-like protein, found in Shewanella woodyi (strain ATCC 51908 / MS32).